A 353-amino-acid chain; its full sequence is MNGTEGENFYIPFSNKTGLARSPFEYPQYYLAEPWKYSVLAAYMFFLILVGFPVNFLTLFVTVQHKKLRTPLNYILLNLAVANLFMVLFGFTLTMYSSMNGYFVFGPTMCNFEGFFATLGGEMSLWSLVVLAIERYIVICKPMGNFRFGSTHAYMGVAFTWFMALSCAAPPLVGWSRYLPEGMQCSCGPDYYTLNPNFNNESFVIYMFLVHFIIPFIVIFFCYGRLLCTVKEAAAAQQESASTQKAEKEVTRMVVLMVIGFLVCWVPYASVAFYIFTHQGSDFGATFMTVPAFFAKTSALYNPIIYILMNKQFRNCMITTLCCGKNPLGDEDSGASTSKTEVSSVSTSQVSPA.

The Extracellular segment spans residues 1-36; the sequence is MNGTEGENFYIPFSNKTGLARSPFEYPQYYLAEPWK. Residues Asn2 and Asn15 are each glycosylated (N-linked (GlcNAc...) asparagine). A helical transmembrane segment spans residues 37–61; that stretch reads YSVLAAYMFFLILVGFPVNFLTLFV. Topologically, residues 62–73 are cytoplasmic; that stretch reads TVQHKKLRTPLN. A helical transmembrane segment spans residues 74–96; it reads YILLNLAVANLFMVLFGFTLTMY. Over 97 to 110 the chain is Extracellular; the sequence is SSMNGYFVFGPTMC. A disulfide bond links Cys110 and Cys187. A helical transmembrane segment spans residues 111 to 133; that stretch reads NFEGFFATLGGEMSLWSLVVLAI. The short motif at 134–136 is the 'Ionic lock' involved in activated form stabilization element; it reads ERY. The Cytoplasmic portion of the chain corresponds to 134–152; it reads ERYIVICKPMGNFRFGSTH. The chain crosses the membrane as a helical span at residues 153–173; it reads AYMGVAFTWFMALSCAAPPLV. Over 174-202 the chain is Extracellular; it reads GWSRYLPEGMQCSCGPDYYTLNPNFNNES. Residues 203 to 224 traverse the membrane as a helical segment; it reads FVIYMFLVHFIIPFIVIFFCYG. The Cytoplasmic segment spans residues 225–252; it reads RLLCTVKEAAAAQQESASTQKAEKEVTR. The chain crosses the membrane as a helical span at residues 253–274; it reads MVVLMVIGFLVCWVPYASVAFY. The Extracellular segment spans residues 275–286; it reads IFTHQGSDFGAT. The chain crosses the membrane as a helical span at residues 287–308; sequence FMTVPAFFAKTSALYNPIIYIL. The residue at position 296 (Lys296) is an N6-(retinylidene)lysine. Topologically, residues 309–353 are cytoplasmic; that stretch reads MNKQFRNCMITTLCCGKNPLGDEDSGASTSKTEVSSVSTSQVSPA. The interval 330-353 is disordered; it reads DEDSGASTSKTEVSSVSTSQVSPA. Residues 336–353 show a composition bias toward low complexity; it reads STSKTEVSSVSTSQVSPA.

It belongs to the G-protein coupled receptor 1 family. Opsin subfamily. Post-translationally, phosphorylated on some or all of the serine and threonine residues present in the C-terminal region. Contains one covalently linked retinal chromophore.

The protein localises to the membrane. It is found in the cell projection. It localises to the cilium. Its subcellular location is the photoreceptor outer segment. Photoreceptor required for image-forming vision at low light intensity. While most salt water fish species use retinal as chromophore, most freshwater fish use 3-dehydroretinal, or a mixture of retinal and 3-dehydroretinal. Light-induced isomerization of 11-cis to all-trans retinal triggers a conformational change that activates signaling via G-proteins. Subsequent receptor phosphorylation mediates displacement of the bound G-protein alpha subunit by arrestin and terminates signaling. This Petromyzon marinus (Sea lamprey) protein is Rhodopsin (RHO).